Reading from the N-terminus, the 957-residue chain is MNFAEREGSKRYCIQTKHVAILCAVVVGVGLIVGLAVGLTRSCDSSGDGGPGTAPAPSHLPSSTASPSGPPAQDQDICPASEDESGQWKNFRLPDFVNPVHYDLHVKPLLEEDTYTGTVSISINLSAPTRYLWLHLRETRITRLPELKRPSGDQVQVRRCFEYKKQEYVVVEAEEELTPSSGDGLYLLTMEFAGWLNGSLVGFYRTTYTENGQVKSIVATDHEPTDARKSFPCFDEPNKKATYTISITHPKEYGALSNMPVAKEESVDDKWTRTTFEKSVPMSTYLVCFAVHQFDSVKRISNSGKPLTIYVQPEQKHTAEYAANITKSVFDYFEEYFAMNYSLPKLDKIAIPDFGTGAMENWGLITYRETNLLYDPKESASSNQQRVATVVAHELVHQWFGNIVTMDWWEDLWLNEGFASFFEFLGVNHAETDWQMRDQMLLEDVLPVQEDDSLMSSHPIIVTVTTPDEITSVFDGISYSKGSSILRMLEDWIKPENFQKGCQMYLEKYQFKNAKTSDFWAALEEASRLPVKEVMDTWTRQMGYPVLNVNGVKNITQKRFLLDPRANPSQPPSDLGYTWNIPVKWTEDNITSSVLFNRSEKEGITLNSSNPSGNAFLKINPDHIGFYRVNYEVATWDSIATALSLNHKTFSSADRASLIDDAFALARAQLLDYKVALNLTKYLKREENFLPWQRVISAVTYIISMFEDDKELYPMIEEYFQGQVKPIADSLGWNDAGDHVTKLLRSSVLGFACKMGDREALNNASSLFEQWLNGTVSLPVNLRLLVYRYGMQNSGNEISWNYTLEQYQKTSLAQEKEKLLYGLASVKNVTLLSRYLDLLKDTNLIKTQDVFTVIRYISYNSYGKNMAWNWIQLNWDYLVNRYTLNNRNLGRIVTIAEPFNTELQLWQMESFFAKYPQAGAGEKPREQVLETVKNNIEWLKQHRNTIREWFFNLLESG.

Residues 1-18 (MNFAEREGSKRYCIQTKH) lie on the Cytoplasmic side of the membrane. A helical; Signal-anchor for type II membrane protein transmembrane segment spans residues 19–39 (VAILCAVVVGVGLIVGLAVGL). Residues 40–957 (TRSCDSSGDG…EWFFNLLESG (918 aa)) lie on the Extracellular side of the membrane. The tract at residues 44–83 (DSSGDGGPGTAPAPSHLPSSTASPSGPPAQDQDICPASED) is disordered. N98 carries an N-linked (GlcNAc...) asparagine; atypical glycan. 2 N-linked (GlcNAc...) asparagine glycosylation sites follow: N124 and N197. E223 contributes to the substrate binding site. 2 N-linked (GlcNAc...) asparagine glycosylation sites follow: N324 and N340. 357–361 (GAMEN) contributes to the substrate binding site. Residue H393 participates in Zn(2+) binding. E394 serves as the catalytic Proton acceptor. Positions 397 and 416 each coordinate Zn(2+). N554, N589, N597, N607, N678, N763, N773, N801, and N828 each carry an N-linked (GlcNAc...) asparagine glycan. R887 contacts substrate.

It belongs to the peptidase M1 family. As to quaternary structure, homodimer; disulfide-linked. The cofactor is Zn(2+). In terms of tissue distribution, expressed in choriocarcinoma cancer cell lines (at protein level). Expressed by epithelial cells of the proximal tubule cells and the glomerulus of the nephron. Also found in a variety of other tissues.

The protein resides in the cell membrane. It catalyses the reaction Release of N-terminal glutamate (and to a lesser extent aspartate) from a peptide.. Its activity is regulated as follows. Substrate specificity is modulated by calcium which enhances the enzymatic activity for cleavage of acidic residues while reducing its activity with basic residues. Inhibited by aminopeptidase inhibitors amastatin and bestatin. Its function is as follows. Regulates central hypertension through its calcium-modulated preference to cleave N-terminal acidic residues from peptides such as angiotensin II. The chain is Glutamyl aminopeptidase (ENPEP) from Homo sapiens (Human).